Here is a 258-residue protein sequence, read N- to C-terminus: Ribose-5-phosphate isomerase (258 aa).

Belongs to the ribose 5-phosphate isomerase family.

Its subcellular location is the cytoplasm. It catalyses the reaction aldehydo-D-ribose 5-phosphate = D-ribulose 5-phosphate. It participates in carbohydrate degradation; pentose phosphate pathway; D-ribose 5-phosphate from D-ribulose 5-phosphate (non-oxidative stage): step 1/1. The polypeptide is Ribose-5-phosphate isomerase (RKI1) (Saccharomyces cerevisiae (strain YJM789) (Baker's yeast)).